The chain runs to 493 residues: MSETTQNEAPVAAQGASQHSNIVGRVTQVRGAVVDVQFEGTLPHILDALHVTFNGQTVVLEVAQEIGEHEVRCIAMDTTDGLMRGTEVVATGGQITVPVGPGTLGRILNVIGEPIDERGPVKSDKRYPIHRKAPSFDEQAAATEILVTGIKVVDLLCPYLKGGKVGLFGGAGVGKTVIIQELINNIAKAHGGVSVFAGVGERTREGNDLYYEMQDAGVIKLGEDTTEGSKVALVYGQMNEPPGARARIALSGLSLAEYFRDEEGQDVLFFVDNIFRFTQAGAEVSALLGRIPSAVGYQPTLATEMGALQERITSTKKGSITSVQAVYVPADDLTDPAPAATFAHLDATTVLNRSIAEMGIYPAVDPLDSTSRSLDPKIVGEEHYQVARDVQRILQTYKSLQDIIAILGMDELSEDDKQVVARARRIQRFLSQPFHVAEVFTGAPGKLVSLEDTVRSFKAIVAGEYDHLPEGAFYMVGSIEEAVAKAEKMKETA.

Position 169–176 (glycine 169–threonine 176) interacts with ATP.

This sequence belongs to the ATPase alpha/beta chains family. In terms of assembly, F-type ATPases have 2 components, CF(1) - the catalytic core - and CF(0) - the membrane proton channel. CF(1) has five subunits: alpha(3), beta(3), gamma(1), delta(1), epsilon(1). CF(0) has three main subunits: a(1), b(2) and c(9-12). The alpha and beta chains form an alternating ring which encloses part of the gamma chain. CF(1) is attached to CF(0) by a central stalk formed by the gamma and epsilon chains, while a peripheral stalk is formed by the delta and b chains.

It is found in the cell inner membrane. It catalyses the reaction ATP + H2O + 4 H(+)(in) = ADP + phosphate + 5 H(+)(out). Functionally, produces ATP from ADP in the presence of a proton gradient across the membrane. The catalytic sites are hosted primarily by the beta subunits. This chain is ATP synthase subunit beta, found in Gluconacetobacter diazotrophicus (strain ATCC 49037 / DSM 5601 / CCUG 37298 / CIP 103539 / LMG 7603 / PAl5).